The chain runs to 819 residues: Leucine--tRNA ligase (819 aa).

Residues 40-51 (PYPSGAGLHVGH) carry the 'HIGH' region motif. Residues 600–604 (KMSKS) carry the 'KMSKS' region motif. Lys603 contacts ATP.

It belongs to the class-I aminoacyl-tRNA synthetase family.

The protein localises to the cytoplasm. It carries out the reaction tRNA(Leu) + L-leucine + ATP = L-leucyl-tRNA(Leu) + AMP + diphosphate. This chain is Leucine--tRNA ligase, found in Chlamydia muridarum (strain MoPn / Nigg).